A 405-amino-acid polypeptide reads, in one-letter code: Phosphopentomutase (405 aa).

Residues D10, D297, H302, D338, H339, and H350 each contribute to the Mn(2+) site.

This sequence belongs to the phosphopentomutase family. Mn(2+) serves as cofactor.

It localises to the cytoplasm. The enzyme catalyses 2-deoxy-alpha-D-ribose 1-phosphate = 2-deoxy-D-ribose 5-phosphate. The catalysed reaction is alpha-D-ribose 1-phosphate = D-ribose 5-phosphate. Its pathway is carbohydrate degradation; 2-deoxy-D-ribose 1-phosphate degradation; D-glyceraldehyde 3-phosphate and acetaldehyde from 2-deoxy-alpha-D-ribose 1-phosphate: step 1/2. Functionally, isomerase that catalyzes the conversion of deoxy-ribose 1-phosphate (dRib-1-P) and ribose 1-phosphate (Rib-1-P) to deoxy-ribose 5-phosphate (dRib-5-P) and ribose 5-phosphate (Rib-5-P), respectively. In Pseudoalteromonas translucida (strain TAC 125), this protein is Phosphopentomutase.